A 44-amino-acid polypeptide reads, in one-letter code: Endochitinase 1 (44 aa).

The protein belongs to the glycosyl hydrolase 19 family. Chitinase class I subfamily.

It carries out the reaction Random endo-hydrolysis of N-acetyl-beta-D-glucosaminide (1-&gt;4)-beta-linkages in chitin and chitodextrins.. Its function is as follows. Defense against chitin-containing fungal pathogens. This chain is Endochitinase 1, found in Capsicum chinense (Scotch bonnet).